Consider the following 1096-residue polypeptide: cAMP/cGMP-dependent 3',5'-cAMP/cGMP phosphodiesterase B (1096 aa).

A disordered region spans residues 216 to 248; it reads SSSKMIINDSPRTQQRNGTTEQQKKQQQQQYLQ. The segment covering 225–236 has biased composition (polar residues); the sequence is SPRTQQRNGTTE. Positions 573, 575, and 577 each coordinate a divalent metal cation. Residues 783-930 and 946-1070 contribute to the a nucleoside 3',5'-cyclic phosphate site; these read VFSK…DLSH and ITQH…EDNI.

The protein belongs to the metallo-beta-lactamase superfamily. cNMP phosphodiesterase family. Mn(2+) is required as a cofactor. It depends on Mg(2+) as a cofactor. Zn(2+) serves as cofactor.

The protein localises to the cytoplasm. It is found in the cytosol. The catalysed reaction is 3',5'-cyclic AMP + H2O = AMP + H(+). It carries out the reaction 3',5'-cyclic GMP + H2O = GMP + H(+). In terms of biological role, dual specificity cAMP and cGMP phosphodiesterase with marked preference for cyclic AMP, which is activated by cAMP and cGMP. Likely functions as a cAMP-stimulated cAMP-phosphodiesterase which may play a role in regulating the cAMP relay response. The sequence is that of cAMP/cGMP-dependent 3',5'-cAMP/cGMP phosphodiesterase B (pdeE) from Dictyostelium discoideum (Social amoeba).